We begin with the raw amino-acid sequence, 565 residues long: CTP synthase (565 aa).

The amidoligase domain stretch occupies residues 1–272 (MARPKNVKHI…DLRVMKKLGL (272 aa)). Ser18 lines the CTP pocket. Position 18 (Ser18) interacts with UTP. Residue 19-24 (SLGKGI) coordinates ATP. L-glutamine is bound at residue Tyr59. An ATP-binding site is contributed by Asp76. 2 residues coordinate Mg(2+): Asp76 and Glu146. CTP is bound by residues 153–155 (DIE), 193–198 (KTKPTQ), and Lys229. UTP is bound by residues 193–198 (KTKPTQ) and Lys229. Residues 299–543 (TIGVCGKYTE…VAAAKEYEKG (245 aa)) form the Glutamine amidotransferase type-1 domain. Position 363 (Gly363) interacts with L-glutamine. Cys390 functions as the Nucleophile; for glutamine hydrolysis in the catalytic mechanism. L-glutamine is bound by residues 391–394 (LGMQ), Glu414, and Arg471. Active-site residues include His516 and Glu518.

The protein belongs to the CTP synthase family. As to quaternary structure, homotetramer.

The enzyme catalyses UTP + L-glutamine + ATP + H2O = CTP + L-glutamate + ADP + phosphate + 2 H(+). It catalyses the reaction L-glutamine + H2O = L-glutamate + NH4(+). It carries out the reaction UTP + NH4(+) + ATP = CTP + ADP + phosphate + 2 H(+). The protein operates within pyrimidine metabolism; CTP biosynthesis via de novo pathway; CTP from UDP: step 2/2. Its activity is regulated as follows. Allosterically activated by GTP, when glutamine is the substrate; GTP has no effect on the reaction when ammonia is the substrate. The allosteric effector GTP functions by stabilizing the protein conformation that binds the tetrahedral intermediate(s) formed during glutamine hydrolysis. Inhibited by the product CTP, via allosteric rather than competitive inhibition. In terms of biological role, catalyzes the ATP-dependent amination of UTP to CTP with either L-glutamine or ammonia as the source of nitrogen. Regulates intracellular CTP levels through interactions with the four ribonucleotide triphosphates. This Chlorobium phaeobacteroides (strain DSM 266 / SMG 266 / 2430) protein is CTP synthase.